Reading from the N-terminus, the 61-residue chain is Large ribosomal subunit protein uL30 (61 aa).

Belongs to the universal ribosomal protein uL30 family. In terms of assembly, part of the 50S ribosomal subunit.

The protein is Large ribosomal subunit protein uL30 of Laribacter hongkongensis (strain HLHK9).